Reading from the N-terminus, the 590-residue chain is Mannosyl-oligosaccharide 1,2-alpha-mannosidase mans-2 (590 aa).

Over 1–9 (MKTVRFNKQ) the chain is Cytoplasmic. A helical; Signal-anchor for type II membrane protein membrane pass occupies residues 10–30 (ALAILAACFIFLLCVVCYFSA). The Lumenal portion of the chain corresponds to 31-590 (SSESHNAVVV…EAHPVPVLTN (560 aa)). Residues 88–102 (PARVESKPPGEKTST) show a composition bias toward basic and acidic residues. The interval 88–112 (PARVESKPPGEKTSTEPEETGVGKA) is disordered. Asparagine 156, asparagine 212, asparagine 373, and asparagine 402 each carry an N-linked (GlcNAc...) asparagine glycan. The cysteines at positions 423 and 456 are disulfide-linked. Glutamate 470 functions as the Proton donor in the catalytic mechanism. Residue threonine 580 coordinates Ca(2+).

It belongs to the glycosyl hydrolase 47 family. It depends on Ca(2+) as a cofactor.

The protein localises to the membrane. The catalysed reaction is N(4)-(alpha-D-Man-(1-&gt;2)-alpha-D-Man-(1-&gt;2)-alpha-D-Man-(1-&gt;3)-[alpha-D-Man-(1-&gt;2)-alpha-D-Man-(1-&gt;3)-[alpha-D-Man-(1-&gt;2)-alpha-D-Man-(1-&gt;6)]-alpha-D-Man-(1-&gt;6)]-beta-D-Man-(1-&gt;4)-beta-D-GlcNAc-(1-&gt;4)-beta-D-GlcNAc)-L-asparaginyl-[protein] (N-glucan mannose isomer 9A1,2,3B1,2,3) + 4 H2O = N(4)-(alpha-D-Man-(1-&gt;3)-[alpha-D-Man-(1-&gt;3)-[alpha-D-Man-(1-&gt;6)]-alpha-D-Man-(1-&gt;6)]-beta-D-Man-(1-&gt;4)-beta-D-GlcNAc-(1-&gt;4)-beta-D-GlcNAc)-L-asparaginyl-[protein] (N-glucan mannose isomer 5A1,2) + 4 beta-D-mannose. It carries out the reaction N(4)-(alpha-D-Man-(1-&gt;2)-alpha-D-Man-(1-&gt;2)-alpha-D-Man-(1-&gt;3)-[alpha-D-Man-(1-&gt;3)-[alpha-D-Man-(1-&gt;2)-alpha-D-Man-(1-&gt;6)]-alpha-D-Man-(1-&gt;6)]-beta-D-Man-(1-&gt;4)-beta-D-GlcNAc-(1-&gt;4)-beta-D-GlcNAc)-L-asparaginyl-[protein] (N-glucan mannose isomer 8A1,2,3B1,3) + 3 H2O = N(4)-(alpha-D-Man-(1-&gt;3)-[alpha-D-Man-(1-&gt;3)-[alpha-D-Man-(1-&gt;6)]-alpha-D-Man-(1-&gt;6)]-beta-D-Man-(1-&gt;4)-beta-D-GlcNAc-(1-&gt;4)-beta-D-GlcNAc)-L-asparaginyl-[protein] (N-glucan mannose isomer 5A1,2) + 3 beta-D-mannose. Its pathway is protein modification; protein glycosylation. In terms of biological role, involved in the maturation of Asn-linked oligosaccharides. Progressively trim alpha-1,2-linked mannose residues from Man(9)GlcNAc(2) to produce Man(5)GlcNAc(2). This chain is Mannosyl-oligosaccharide 1,2-alpha-mannosidase mans-2, found in Caenorhabditis elegans.